The following is a 302-amino-acid chain: Phytoene synthase (302 aa).

The protein belongs to the phytoene/squalene synthase family. It depends on ATP as a cofactor. Requires Mn(2+) as cofactor. The cofactor is Mg(2+).

It functions in the pathway carotenoid biosynthesis; phytoene biosynthesis. In terms of biological role, involved in the biosynthesis of carotenoids. Catalyzes the condensation of two molecules of geranylgeranyl diphosphate (GGPP) to give prephytoene diphosphate (PPPP) and the subsequent rearrangement of the cyclopropylcarbinyl intermediate to yield phytoene. This chain is Phytoene synthase (crtB), found in Mycobacterium bovis (strain ATCC BAA-935 / AF2122/97).